Consider the following 285-residue polypeptide: Probable endonuclease 4 (285 aa).

Zn(2+)-binding residues include H69, H109, E145, D179, H182, H216, D229, H231, and E261.

Belongs to the AP endonuclease 2 family. Zn(2+) serves as cofactor.

The enzyme catalyses Endonucleolytic cleavage to 5'-phosphooligonucleotide end-products.. Endonuclease IV plays a role in DNA repair. It cleaves phosphodiester bonds at apurinic or apyrimidinic (AP) sites, generating a 3'-hydroxyl group and a 5'-terminal sugar phosphate. The sequence is that of Probable endonuclease 4 from Shigella flexneri serotype 5b (strain 8401).